The sequence spans 440 residues: Alpha-methylserine aldolase (440 aa).

Residue lysine 255 is modified to N6-(pyridoxal phosphate)lysine.

It belongs to the SHMT family. Alpha-methylserine aldolase subfamily. In terms of assembly, homodimer. The cofactor is pyridoxal 5'-phosphate.

The enzyme catalyses 2-methyl-L-serine = formaldehyde + L-alanine. Functionally, catalyzes the reversible interconversion of alpha-methyl-L-serine to L-alanine and formaldehyde. The sequence is that of Alpha-methylserine aldolase from Variovorax paradoxus.